The following is a 758-amino-acid chain: UPF0313 protein CV_1738 (758 aa).

In terms of domain architecture, Radical SAM core spans 377-642 (AWEMIKYSVN…VDVVRDGYRR (266 aa)). [4Fe-4S] cluster-binding residues include cysteine 391, cysteine 395, and cysteine 398. The tract at residues 698–758 (GAPMNRGKSP…KPGGKTSRSR (61 aa)) is disordered. Gly residues predominate over residues 727–737 (RGQGGQGGRPG).

The protein belongs to the UPF0313 family. It depends on [4Fe-4S] cluster as a cofactor.

The polypeptide is UPF0313 protein CV_1738 (Chromobacterium violaceum (strain ATCC 12472 / DSM 30191 / JCM 1249 / CCUG 213 / NBRC 12614 / NCIMB 9131 / NCTC 9757 / MK)).